We begin with the raw amino-acid sequence, 938 residues long: Isoleucine--tRNA ligase (938 aa).

Positions 58–68 (PYANGNIHIGH) match the 'HIGH' region motif. Residue glutamate 562 participates in L-isoleucyl-5'-AMP binding. Residues 603–607 (KMSKS) carry the 'KMSKS' region motif. Lysine 606 contributes to the ATP binding site. Zn(2+) contacts are provided by cysteine 901, cysteine 904, cysteine 921, and cysteine 924.

The protein belongs to the class-I aminoacyl-tRNA synthetase family. IleS type 1 subfamily. As to quaternary structure, monomer. The cofactor is Zn(2+).

The protein localises to the cytoplasm. The catalysed reaction is tRNA(Ile) + L-isoleucine + ATP = L-isoleucyl-tRNA(Ile) + AMP + diphosphate. In terms of biological role, catalyzes the attachment of isoleucine to tRNA(Ile). As IleRS can inadvertently accommodate and process structurally similar amino acids such as valine, to avoid such errors it has two additional distinct tRNA(Ile)-dependent editing activities. One activity is designated as 'pretransfer' editing and involves the hydrolysis of activated Val-AMP. The other activity is designated 'posttransfer' editing and involves deacylation of mischarged Val-tRNA(Ile). The protein is Isoleucine--tRNA ligase of Actinobacillus pleuropneumoniae serotype 7 (strain AP76).